The chain runs to 90 residues: MNKAIITVVGQDTVGIIARVCTYLSQHNVNVLDISQTIIDGYFNMMMIVDYANADKDFGAMVGNLEDLGDDIGVRIRCQREEIFTKMHRI.

Positions 5–79 constitute an ACT domain; the sequence is IITVVGQDTV…DDIGVRIRCQ (75 aa).

The protein belongs to the UPF0237 family.

The sequence is that of UPF0237 protein BL1209.1 from Bifidobacterium longum (strain NCC 2705).